Here is a 294-residue protein sequence, read N- to C-terminus: Nucleotide-binding protein CLK_2809 (294 aa).

An ATP-binding site is contributed by 8–15 (GLSGAGKT). Residue 59–62 (DIRG) coordinates GTP.

Belongs to the RapZ-like family.

Its function is as follows. Displays ATPase and GTPase activities. The protein is Nucleotide-binding protein CLK_2809 of Clostridium botulinum (strain Loch Maree / Type A3).